The sequence spans 206 residues: Adenylate kinase (206 aa).

10–15 serves as a coordination point for ATP; it reads GAGKGT. Residues 30-59 form an NMP region; it reads STGDILREAVQKGTPLGKKAKEYMERGELV. AMP is bound by residues T31, 57–59, 82–85, and Q89; these read ELV and GFPR. ATP contacts are provided by residues R120, R124, and 133–134; that span reads VY. Residues 123 to 153 are LID; sequence GRRINPETGEVYHVKYNPPPPGVKVIQREDD. R161 lines the AMP pocket. K189 is a binding site for ATP.

The protein belongs to the adenylate kinase family. In terms of assembly, monomer.

Its subcellular location is the cytoplasm. It catalyses the reaction AMP + ATP = 2 ADP. It functions in the pathway purine metabolism; AMP biosynthesis via salvage pathway; AMP from ADP: step 1/1. In terms of biological role, catalyzes the reversible transfer of the terminal phosphate group between ATP and AMP. Plays an important role in cellular energy homeostasis and in adenine nucleotide metabolism. The protein is Adenylate kinase of Aquifex aeolicus (strain VF5).